We begin with the raw amino-acid sequence, 39 residues long: Photosystem II reaction center protein J (39 aa).

A helical membrane pass occupies residues 7–27 (IPLWIVATVAGTGVLVVVGLF).

The protein belongs to the PsbJ family. In terms of assembly, PSII is composed of 1 copy each of membrane proteins PsbA, PsbB, PsbC, PsbD, PsbE, PsbF, PsbH, PsbI, PsbJ, PsbK, PsbL, PsbM, PsbT, PsbX, PsbY, PsbZ, Psb30/Ycf12, peripheral proteins PsbO, CyanoQ (PsbQ), PsbU, PsbV and a large number of cofactors. It forms dimeric complexes.

It localises to the cellular thylakoid membrane. One of the components of the core complex of photosystem II (PSII). PSII is a light-driven water:plastoquinone oxidoreductase that uses light energy to abstract electrons from H(2)O, generating O(2) and a proton gradient subsequently used for ATP formation. It consists of a core antenna complex that captures photons, and an electron transfer chain that converts photonic excitation into a charge separation. The sequence is that of Photosystem II reaction center protein J from Synechococcus elongatus (strain ATCC 33912 / PCC 7942 / FACHB-805) (Anacystis nidulans R2).